Here is a 478-residue protein sequence, read N- to C-terminus: Early growth response protein 4 (478 aa).

The segment at 275–302 (TEGLPALLTPPGGEGGSGGEGGEFLAAP) is disordered. Over residues 286–296 (GGEGGSGGEGG) the composition is skewed to gly residues. 3 C2H2-type zinc fingers span residues 372 to 396 (FACP…LRIH), 402 to 424 (FQCR…VRTH), and 430 to 452 (FACD…SKVH).

This sequence belongs to the EGR C2H2-type zinc-finger protein family.

The protein localises to the nucleus. In terms of biological role, transcriptional regulator. Recognizes and binds to the DNA sequence 5'-GCGGGGGCG-3' (GSG). Activates the transcription of target genes whose products are required for mitogenesis and differentiation. This chain is Early growth response protein 4 (Egr4), found in Mus musculus (Mouse).